We begin with the raw amino-acid sequence, 424 residues long: Isovaleryl-CoA dehydrogenase, mitochondrial (424 aa).

The transit peptide at 1–30 (MATAVRLLGRRVSSWRLRPLPSPLAVPQRA) directs the protein to the mitochondrion. Residues Lys56, Lys65, and Lys76 each carry the N6-acetyllysine; alternate modification. Lys56, Lys65, and Lys76 each carry N6-succinyllysine; alternate. FAD is bound by residues 163–172 (LAMSEPNAGS) and 196–198 (WIT). Ser172 serves as a coordination point for substrate. Position 220 to 221 (220 to 221 (SR)) interacts with substrate. At Lys239 the chain carries N6-acetyllysine. Lys260 carries the N6-acetyllysine; alternate modification. Lys260 bears the N6-succinyllysine; alternate mark. Residues Tyr275 and 282-285 (DLER) each bind substrate. Catalysis depends on Glu284, which acts as the Proton acceptor. Arg310 serves as a coordination point for FAD. N6-succinyllysine is present on Lys316. Residues Gln321 and 378–382 (QCLGG) each bind FAD. 405 to 406 (GG) contacts substrate. Position 407–409 (407–409 (TSE)) interacts with FAD.

It belongs to the acyl-CoA dehydrogenase family. Homotetramer. Requires FAD as cofactor.

Its subcellular location is the mitochondrion matrix. It catalyses the reaction 3-methylbutanoyl-CoA + oxidized [electron-transfer flavoprotein] + H(+) = 3-methylbut-2-enoyl-CoA + reduced [electron-transfer flavoprotein]. The catalysed reaction is pentanoyl-CoA + oxidized [electron-transfer flavoprotein] + H(+) = (2E)-pentenoyl-CoA + reduced [electron-transfer flavoprotein]. It carries out the reaction hexanoyl-CoA + oxidized [electron-transfer flavoprotein] + H(+) = (2E)-hexenoyl-CoA + reduced [electron-transfer flavoprotein]. The enzyme catalyses butanoyl-CoA + oxidized [electron-transfer flavoprotein] + H(+) = (2E)-butenoyl-CoA + reduced [electron-transfer flavoprotein]. Its pathway is amino-acid degradation; L-leucine degradation; (S)-3-hydroxy-3-methylglutaryl-CoA from 3-isovaleryl-CoA: step 1/3. Its function is as follows. Catalyzes the conversion of isovaleryl-CoA/3-methylbutanoyl-CoA to 3-methylbut-2-enoyl-CoA as an intermediate step in the leucine (Leu) catabolic pathway. To a lesser extent, is also able to catalyze the oxidation of other saturated short-chain acyl-CoA thioesters as pentanoyl-CoA, hexenoyl-CoA and butenoyl-CoA. The chain is Isovaleryl-CoA dehydrogenase, mitochondrial (Ivd) from Rattus norvegicus (Rat).